A 223-amino-acid polypeptide reads, in one-letter code: Alpha-S2-casein (223 aa).

Positions 1-15 (MKLFIFTCLLAVALA) are cleaved as a signal peptide. Phosphoserine is present on residues S23, S24, S25, S28, S46, S71, S72, and S73. Repeats lie at residues 76 to 128 (FADI…TLGK) and 129 to 223 (EQIS…ERQA). Residues S132, S147, and S155 each carry the phosphoserine modification.

This sequence belongs to the alpha-casein family. As to expression, mammary gland specific. Secreted in milk.

The protein localises to the secreted. In terms of biological role, important role in the capacity of milk to transport calcium phosphate. The polypeptide is Alpha-S2-casein (CSN1S2) (Cavia porcellus (Guinea pig)).